A 197-amino-acid polypeptide reads, in one-letter code: Prefoldin subunit 3 (197 aa).

The segment at 1 to 26 (MASLALRGSSENPAPTKDTTTNPRGI) is disordered. The span at 9–23 (SSENPAPTKDTTTNP) shows a compositional bias: polar residues.

The protein belongs to the prefoldin subunit alpha family. As to quaternary structure, heterohexamer of two PFD-alpha type and four PFD-beta type subunits.

Prefoldin subunit; part of the gene cluster that mediates the biosynthesis of elsinochromes, pigments consisting of at least four interconvertible tautomers (A, B, C and D) that have a core phenolic quinone to which various side chains are attached and which play an important role in fungal pathogenesis. The non-reducing polyketide synthase PKS1 was proposed to iteratively catalyze decarboxylation between acetyl-CoA and malonyl-CoA subunits for polyketide chain elongation. The released polyketide undergoes cyclization to form an aromatic ring, and proceeds via serial modification steps to produce the heptaketide back- bone of elsinochrome. As elsinochrome has a symmetrical structure, two identical heptaketides are fused to form a core 1,2-dihydrobenzo-perylene ring structure, which can then be successively modified to produce the various derivatives of elsinochrome. Some of these reactions may be cooperatively carried out, at least in part, by the products of RDT1, OXR1 and PKS1. PRF1, embedded within the elsinochrome cluster possibly functions to stabilize some of the biosynthetic enzymes required for elsinochrome production. As prefoldin is a hexamer containing 2 a and 4 b subunits, additional prefoldin subunits, whose coding genes may not immediately link to the elsinochrome biosynthetic gene cluster, are required to fulfill the chaperone function. In addition, no methyltransferase-coding gene exists within the biosynthetic gene cluster, even though elsinochrome has four methyl groups at positions C3, C7, C8 and C12. Apparently, the identified gene cluster does not contain the entire entourage of genes responsible for elsinochrome biosynthesis. Once elsinochrome is synthesized, it must be exported outside the fungal cells, which is probably accomplished by the ECT1 transporter, to avoid toxicity. The sequence is that of Prefoldin subunit 3 from Elsinoe fawcettii (Citrus scab fungus).